Consider the following 228-residue polypeptide: Lipoprotein-releasing system ATP-binding protein LolD (228 aa).

An ABC transporter domain is found at 6–227 (LELLGIDRTY…LKDGKLIDYV (222 aa)). Residue 42–49 (GPSGSGKS) participates in ATP binding.

It belongs to the ABC transporter superfamily. Lipoprotein translocase (TC 3.A.1.125) family. In terms of assembly, the complex is composed of two ATP-binding proteins (LolD) and two transmembrane proteins (LolC and LolE).

It is found in the cell inner membrane. Part of the ABC transporter complex LolCDE involved in the translocation of mature outer membrane-directed lipoproteins, from the inner membrane to the periplasmic chaperone, LolA. Responsible for the formation of the LolA-lipoprotein complex in an ATP-dependent manner. In Hyphomonas neptunium (strain ATCC 15444), this protein is Lipoprotein-releasing system ATP-binding protein LolD.